A 969-amino-acid polypeptide reads, in one-letter code: Manganese resistance protein MNR2 (969 aa).

A compositionally biased stretch (basic and acidic residues) spans 1–11; sequence MSTDNSQKDEG. 4 disordered regions span residues 1 to 49, 96 to 153, 167 to 186, and 199 to 256; these read MSTD…SRRP, GAFI…DLSP, HKSF…NANN, and VNNN…NNSS. Residues 1-912 lie on the Cytoplasmic side of the membrane; the sequence is MSTDNSQKDE…DMNDVLGKIT (912 aa). Low complexity predominate over residues 13-23; that stretch reads PLLSPYSSSPQ. A compositionally biased stretch (basic residues) spans 24-36; the sequence is LRKKKRNQKRRKD. Residues 37–48 show a composition bias toward basic and acidic residues; that stretch reads KFVGHLKSDSRR. Position 114 is a phosphoserine (serine 114). Positions 141 to 152 are enriched in polar residues; the sequence is SDQNRSLVSDLS. Serine 175 bears the Phosphoserine mark. Threonine 177 is subject to Phosphothreonine. At serine 182 the chain carries Phosphoserine. 2 stretches are compositionally biased toward low complexity: residues 225–234 and 244–256; these read NKNSKSTSSD and SRPS…NNSS. Serine 383 carries the post-translational modification Phosphoserine. Disordered regions lie at residues 559–662 and 746–769; these read VRRR…KPRE and QSDD…DEDA. The span at 565–578 shows a compositional bias: basic and acidic residues; sequence EKQESATLDHESIS. Residue threonine 571 is modified to Phosphothreonine. Phosphoserine occurs at positions 576 and 582. Composition is skewed to low complexity over residues 590–607 and 622–632; these read SNES…ASRS and ANRTTNTSSSS. The segment covering 749-769 has biased composition (acidic residues); that stretch reads DSSDSDSSDSDSDSGASDEDA. A helical transmembrane segment spans residues 913–933; it reads ILGTIVLPMNVITGLWGMNVI. Topologically, residues 934–941 are extracellular; sequence VPGQYRDS. Residues 942-962 form a helical membrane-spanning segment; the sequence is LTWFIGIVLFMCMLACSAYMY. Residues 963 to 969 lie on the Cytoplasmic side of the membrane; that stretch reads TKRRFGF.

Belongs to the CorA metal ion transporter (MIT) (TC 1.A.35) family.

The protein localises to the membrane. This chain is Manganese resistance protein MNR2 (MNR2), found in Saccharomyces cerevisiae (strain ATCC 204508 / S288c) (Baker's yeast).